Consider the following 526-residue polypeptide: Alpha-ketoglutaric semialdehyde dehydrogenase (526 aa).

NADP(+) contacts are provided by residues 159–160, 185–188, and 240–241; these read SN, KAHS, and GS. The active-site Proton acceptor is Glu-264. Cys-301 serves as the catalytic Nucleophile. Glu-393 contributes to the NADP(+) binding site.

It belongs to the aldehyde dehydrogenase family.

The catalysed reaction is 2,5-dioxopentanoate + NADP(+) + H2O = 2-oxoglutarate + NADPH + 2 H(+). It participates in carbohydrate acid metabolism; D-glucarate degradation. Its function is as follows. Catalyzes the NAD(P)(+)-dependent oxidation of alpha-ketoglutaric semialdehyde (alphaKGSA) to alpha-ketoglutarate in the D-glutarate degradation pathway. The chain is Alpha-ketoglutaric semialdehyde dehydrogenase from Acinetobacter baylyi (strain ATCC 33305 / BD413 / ADP1).